The sequence spans 230 residues: Fibrillarin-like rRNA/tRNA 2'-O-methyltransferase (230 aa).

S-adenosyl-L-methionine contacts are provided by residues 87–88 (TT), 105–106 (EF), 130–131 (DA), and 150–153 (DVAQ).

This sequence belongs to the methyltransferase superfamily. Fibrillarin family. Interacts with nop5. Component of box C/D small ribonucleoprotein (sRNP) particles that contain rpl7ae, FlpA and nop5, plus a guide RNA.

In terms of biological role, involved in pre-rRNA and tRNA processing. Utilizes the methyl donor S-adenosyl-L-methionine to catalyze the site-specific 2'-hydroxyl methylation of ribose moieties in rRNA and tRNA. Site specificity is provided by a guide RNA that base pairs with the substrate. Methylation occurs at a characteristic distance from the sequence involved in base pairing with the guide RNA. This is Fibrillarin-like rRNA/tRNA 2'-O-methyltransferase from Methanococcus maripaludis (strain DSM 14266 / JCM 13030 / NBRC 101832 / S2 / LL).